A 166-amino-acid chain; its full sequence is Interferon gamma (166 aa).

An N-terminal signal peptide occupies residues 1–23; the sequence is MKYTSYFLALLLCVLLGFSGSYG. At Q24 the chain carries Pyrrolidone carboxylic acid. N39 and N106 each carry an N-linked (GlcNAc...) asparagine glycan.

This sequence belongs to the type II (or gamma) interferon family. In terms of assembly, homodimer. Interacts with IFNGR1 (via extracellular domain); this interaction promotes IFNGR1 dimerization. As to expression, released primarily from activated T lymphocytes.

It is found in the secreted. Functionally, type II interferon produced by immune cells such as T-cells and NK cells that plays crucial roles in antimicrobial, antiviral, and antitumor responses by activating effector immune cells and enhancing antigen presentation. Primarily signals through the JAK-STAT pathway after interaction with its receptor IFNGR1 to affect gene regulation. Upon IFNG binding, IFNGR1 intracellular domain opens out to allow association of downstream signaling components JAK2, JAK1 and STAT1, leading to STAT1 activation, nuclear translocation and transcription of IFNG-regulated genes. Many of the induced genes are transcription factors such as IRF1 that are able to further drive regulation of a next wave of transcription. Plays a role in class I antigen presentation pathway by inducing a replacement of catalytic proteasome subunits with immunoproteasome subunits. In turn, increases the quantity, quality, and repertoire of peptides for class I MHC loading. Increases the efficiency of peptide generation also by inducing the expression of activator PA28 that associates with the proteasome and alters its proteolytic cleavage preference. Up-regulates as well MHC II complexes on the cell surface by promoting expression of several key molecules such as cathepsins B/CTSB, H/CTSH, and L/CTSL. Participates in the regulation of hematopoietic stem cells during development and under homeostatic conditions by affecting their development, quiescence, and differentiation. In Bos indicus (Zebu), this protein is Interferon gamma (IFNG).